Reading from the N-terminus, the 313-residue chain is 3'-5' exoribonuclease YhaM (313 aa).

The region spanning 163–279 is the HD domain; sequence HVVSMLRLAK…LHQIDLMDAS (117 aa).

It belongs to the YhaM family.

Its function is as follows. Shows a 3'-5' exoribonuclease activity. This Listeria monocytogenes serotype 4b (strain CLIP80459) protein is 3'-5' exoribonuclease YhaM.